The chain runs to 89 residues: Long neurotoxin homolog NTL2 (89 aa).

Positions 1 to 21 are cleaved as a signal peptide; sequence MKTLLLSLVVVIIVCLDLGYT. 5 cysteine pairs are disulfide-bonded: cysteine 24-cysteine 45, cysteine 27-cysteine 32, cysteine 38-cysteine 66, cysteine 70-cysteine 81, and cysteine 82-cysteine 87. The short motif at 54-56 is the Cell attachment site element; it reads RGD.

Belongs to the three-finger toxin family. Ancestral subfamily. Orphan group V sub-subfamily. In terms of tissue distribution, expressed by the venom gland.

It localises to the secreted. Exhibits M2 muscarinic acetylcholine receptor (CHRM2)-blocking activity, but has a weak binding activity toward nicotinic AChR. Moreover, it inhibits collagen-induced platelet aggregation. This Bungarus multicinctus (Many-banded krait) protein is Long neurotoxin homolog NTL2.